The following is a 131-amino-acid chain: Agouti-signaling protein (131 aa).

Residues methionine 1 to serine 22 form the signal peptide. Asparagine 39 is a glycosylation site (N-linked (GlcNAc...) asparagine). The segment at lysine 58 to arginine 96 is disordered. A compositionally biased stretch (basic residues) spans arginine 70–alanine 84. Cystine bridges form between cysteine 92–cysteine 107, cysteine 99–cysteine 113, cysteine 106–cysteine 124, cysteine 110–cysteine 131, and cysteine 115–cysteine 122. The region spanning cysteine 92–cysteine 131 is the Agouti domain.

Its subcellular location is the secreted. Functionally, involved in the regulation of melanogenesis. The binding of ASP to MC1R precludes alpha-MSH initiated signaling and thus blocks production of cAMP, leading to a down-regulation of eumelanogenesis (brown/black pigment) and thus increasing synthesis of pheomelanin (yellow/red pigment). This Rattus norvegicus (Rat) protein is Agouti-signaling protein.